We begin with the raw amino-acid sequence, 335 residues long: Fructose-1,6-bisphosphatase class 1 (335 aa).

Positions 90, 113, 115, and 116 each coordinate Mg(2+). Substrate is bound by residues 116–119, asparagine 209, tyrosine 242, and lysine 272; that span reads DGSS. Glutamate 278 contributes to the Mg(2+) binding site.

The protein belongs to the FBPase class 1 family. In terms of assembly, homotetramer. It depends on Mg(2+) as a cofactor.

Its subcellular location is the cytoplasm. The enzyme catalyses beta-D-fructose 1,6-bisphosphate + H2O = beta-D-fructose 6-phosphate + phosphate. It functions in the pathway carbohydrate biosynthesis; gluconeogenesis. This Mannheimia succiniciproducens (strain KCTC 0769BP / MBEL55E) protein is Fructose-1,6-bisphosphatase class 1.